The sequence spans 458 residues: Cysteine--tRNA ligase (458 aa).

Cys-29 contacts Zn(2+). A 'HIGH' region motif is present at residues 31–41 (MTVYDLCHLGH). The Zn(2+) site is built by Cys-213, His-238, and Glu-242. The short motif at 270 to 274 (KMSKS) is the 'KMSKS' region element. Lys-273 contacts ATP.

This sequence belongs to the class-I aminoacyl-tRNA synthetase family. In terms of assembly, monomer. It depends on Zn(2+) as a cofactor.

The protein resides in the cytoplasm. The catalysed reaction is tRNA(Cys) + L-cysteine + ATP = L-cysteinyl-tRNA(Cys) + AMP + diphosphate. This is Cysteine--tRNA ligase from Acidovorax sp. (strain JS42).